The sequence spans 434 residues: Alpha-enolase (434 aa).

S40 contributes to the Mg(2+) binding site. Substrate-binding residues include H158 and E167. The active-site Proton donor is E210. The Mg(2+) site is built by D245, E293, and D318. Substrate is bound by residues E293, D318, 370–373 (SHRS), and K394.

Belongs to the enolase family. As to quaternary structure, homodimer. Mg(2+) is required as a cofactor.

It localises to the cytoplasm. The catalysed reaction is (2R)-2-phosphoglycerate = phosphoenolpyruvate + H2O. The protein operates within carbohydrate degradation; glycolysis; pyruvate from D-glyceraldehyde 3-phosphate: step 4/5. The protein is Alpha-enolase of Trachemys scripta elegans (Red-eared slider turtle).